The following is a 731-amino-acid chain: Gelsolin (731 aa).

The actin-severing stretch occupies residues 2–125 (VVEHPEFLKA…YKKGGVASGF (124 aa)). Residues 25–107 (FDLVPVPPNL…VQGFESATFL (83 aa)) form a Gelsolin-like 1 repeat. Y35 is subject to Phosphotyrosine. Ca(2+) contacts are provided by G41, D42, E73, D85, G90, and A92. Residues 72–75 (DESG) are actin-actin interfilament contact point. 111-118 (KSGLKYKK) is a binding site for a 1,2-diacyl-sn-glycero-3-phospho-(1D-myo-inositol-4,5-bisphosphate). V121 contacts Ca(2+). Residue 137–145 (RLFQVKGRR) participates in a 1,2-diacyl-sn-glycero-3-phospho-(1D-myo-inositol-4,5-bisphosphate) binding. The stretch at 147–219 (VRATEVPVSW…SEEGAEPEAM (73 aa)) is one Gelsolin-like 2 repeat. Residues G162 and D163 each contribute to the Ca(2+) site. C164 and C177 are disulfide-bonded. E185 provides a ligand contact to Ca(2+). Positions 197–211 (RDNERSGRARVHVSE) are enriched in basic and acidic residues. Residues 197–216 (RDNERSGRARVHVSEEGAEP) are disordered. Positions 235, 278, 279, and 303 each coordinate Ca(2+). A Gelsolin-like 3 repeat occupies 266-338 (DENPFAQGAL…LPEGGETPLF (73 aa)). Phosphotyrosine occurs at positions 358 and 414. The actin-binding, Ca-sensitive stretch occupies residues 383–731 (AAQHGMDDDG…LDRALAELAA (349 aa)). The stretch at 404-485 (SDKVPVDPAT…VQGKEPAHLM (82 aa)) is one Gelsolin-like 4 repeat. Ca(2+) contacts are provided by G420, D421, E451, D463, G468, P470, and T500. The Gelsolin-like 5 repeat unit spans residues 527 to 591 (AVEVMPKAGA…AEGSEPDSFW (65 aa)). K533 is modified (N6-acetyllysine). Ca(2+) is bound by residues N540 and D541. Residue Y552 is modified to Phosphotyrosine. E563 provides a ligand contact to Ca(2+). Y600 is subject to Phosphotyrosine. Residues 630 to 705 (IEEVPGELMQ…VKQGFEPPSF (76 aa)) form a Gelsolin-like 6 repeat. 3 residues coordinate Ca(2+): D645, D646, and E668. T691 bears the Phosphothreonine mark.

It belongs to the villin/gelsolin family. As to quaternary structure, binds to actin and to fibronectin. Identified in a complex composed of ACTA1, COBL, GSN and TMSB4X. Interacts with the inactive form of EIF2AK2/PKR. Interacts with FLII.

The protein localises to the cytoplasm. It localises to the cytoskeleton. Its function is as follows. Calcium-regulated, actin-modulating protein that binds to the plus (or barbed) ends of actin monomers or filaments, preventing monomer exchange (end-blocking or capping). It can promote the assembly of monomers into filaments (nucleation) as well as sever filaments already formed. Plays a role in ciliogenesis. This chain is Gelsolin (GSN), found in Bos taurus (Bovine).